We begin with the raw amino-acid sequence, 105 residues long: 5,5'-dehydrodivanillate O-demethylase ferredoxin subunit (105 aa).

Residues 2 to 105 (AQLKVVTRDG…GMTVTIAPED (104 aa)) enclose the 2Fe-2S ferredoxin-type domain. [2Fe-2S] cluster contacts are provided by cysteine 40, cysteine 46, cysteine 49, and cysteine 86.

The protein belongs to the adrenodoxin/putidaredoxin family. In terms of assembly, monomer. The three-component monooxygenase is composed of an oxygenase (LigXa), a ferredoxin (LigXc) and a ferredoxin reductase (LigXd). It depends on [2Fe-2S] cluster as a cofactor.

The catalysed reaction is 5,5'-dehydrodivanillate + NADH + O2 + H(+) = 2,2',3-trihydroxy-3'-methoxy-5,5'-dicarboxybiphenyl + formaldehyde + NAD(+) + H2O. Its function is as follows. Involved in the catabolism of 5,5'-dehydrodivanillate (DDVA), an intermediate in the biodegradation of lignin. Part of a three-component monooxygenase that catalyzes the O-demethylation of DDVA, leading to the formation of 2,2',3-trihydroxy-3'-methoxy-5,5'-dicarboxybiphenyl (OH-DDVA). LigXc probably functions as an intermediate electron transfer protein between LigXd and LigXa. The chain is 5,5'-dehydrodivanillate O-demethylase ferredoxin subunit from Sphingobium sp. (strain NBRC 103272 / SYK-6).